A 428-amino-acid chain; its full sequence is Probable RNase MJ4 (428 aa).

Residues His-57, His-59, Asp-61, His-62, His-143, Asp-165, and His-397 each coordinate Zn(2+).

Belongs to the metallo-beta-lactamase superfamily. RNA-metabolizing metallo-beta-lactamase-like family. Zn(2+) serves as cofactor.

Its function is as follows. Probably an RNase. In Methanocaldococcus jannaschii (strain ATCC 43067 / DSM 2661 / JAL-1 / JCM 10045 / NBRC 100440) (Methanococcus jannaschii), this protein is Probable RNase MJ4.